Here is a 291-residue protein sequence, read N- to C-terminus: Gamma-soluble NSF attachment protein (291 aa).

It belongs to the SNAP family.

It localises to the membrane. Required for vesicular transport between the endoplasmic reticulum and the Golgi apparatus. Binds to SNARE complex and then recruits NSF to disassemble it. In Arabidopsis thaliana (Mouse-ear cress), this protein is Gamma-soluble NSF attachment protein (GSNAP).